The following is a 384-amino-acid chain: Prokineticin receptor 2 (384 aa).

The Extracellular segment spans residues 1 to 53; sequence MAAQNGNASFPANFSIPQEHASSLPFNFSYDDYDLPLDEDEDMTKTQTFFAAK. N-linked (GlcNAc...) asparagine glycans are attached at residues N7, N13, and N27. A helical transmembrane segment spans residues 54 to 74; it reads IVIGVALVGIMLTCGIGNFVF. Residues 75-89 are Cytoplasmic-facing; the sequence is ITALTRYKKLRNLTN. The helical transmembrane segment at 90–110 threads the bilayer; it reads LLIANLAISDFLVAIICCPFE. Residues 111-137 are Extracellular-facing; that stretch reads MDYYVVHQLSWEHGHVLCACINYLRTV. A disulfide bridge connects residues C128 and C208. A helical transmembrane segment spans residues 138 to 158; sequence SLYVSTNALLAIAIDRYLAIV. Over 159–171 the chain is Cytoplasmic; it reads HPLKPRMNYQTAS. A helical membrane pass occupies residues 172–192; that stretch reads FLIALVWMVSILISIPSAYFT. Residues 193–223 are Extracellular-facing; that stretch reads KETVLFIVKNQKKIFCGQVWPVDQQLYYKSY. A helical transmembrane segment spans residues 224-244; sequence FLFVFGIEFLGPVFTMTLCYA. Over 245–273 the chain is Cytoplasmic; it reads RISRELWFKAVPGFQTEQIRKRLRCRRKT. A helical membrane pass occupies residues 274–294; it reads VLVLMCILTAYVLCWAPFYGF. At 295–313 the chain is on the extracellular side; that stretch reads TIVRDFFPTVFVKEKHYLT. Residues 314-334 form a helical membrane-spanning segment; it reads AFYVVECIAMSNSMINTVCFV. Topologically, residues 335–384 are cytoplasmic; that stretch reads TVKNSTMKYFKKMLLLHWRPSHHGSKSSADLDLKTSRLPATEEVDCIRLK.

The protein belongs to the G-protein coupled receptor 1 family. In terms of assembly, homodimer.

The protein resides in the cell membrane. Its function is as follows. Receptor for prokineticin 2. Exclusively coupled to the G(q) subclass of heteromeric G proteins. Activation leads to mobilization of calcium, stimulation of phosphoinositide turnover and activation of p44/p42 mitogen-activated protein kinase. This Bos taurus (Bovine) protein is Prokineticin receptor 2 (PROKR2).